Consider the following 142-residue polypeptide: Large ribosomal subunit protein uL16 (142 aa).

Belongs to the universal ribosomal protein uL16 family. As to quaternary structure, part of the 50S ribosomal subunit.

Functionally, binds 23S rRNA and is also seen to make contacts with the A and possibly P site tRNAs. This is Large ribosomal subunit protein uL16 from Thermosipho africanus (strain TCF52B).